The primary structure comprises 298 residues: Ribosomal protein L11 methyltransferase (298 aa).

S-adenosyl-L-methionine-binding residues include T152, G173, D195, and N234.

The protein belongs to the methyltransferase superfamily. PrmA family.

The protein resides in the cytoplasm. It catalyses the reaction L-lysyl-[protein] + 3 S-adenosyl-L-methionine = N(6),N(6),N(6)-trimethyl-L-lysyl-[protein] + 3 S-adenosyl-L-homocysteine + 3 H(+). In terms of biological role, methylates ribosomal protein L11. In Ralstonia pickettii (strain 12J), this protein is Ribosomal protein L11 methyltransferase.